Consider the following 154-residue polypeptide: Large ribosomal subunit protein bL9 (154 aa).

This sequence belongs to the bacterial ribosomal protein bL9 family.

Its function is as follows. Binds to the 23S rRNA. This chain is Large ribosomal subunit protein bL9, found in Buchnera aphidicola subsp. Baizongia pistaciae (strain Bp).